The primary structure comprises 71 residues: MGMRMMVTVFLLGVLATTVVSLRSNRASDGRRGIVNKLNDLVPQYWTECCGRIGPHCSRCICPEVVCPKNG.

Residues 1–21 form the signal peptide; the sequence is MGMRMMVTVFLLGVLATTVVS. Positions 22-37 are excised as a propeptide; sequence LRSNRASDGRRGIVNK. N70 is subject to Asparagine amide.

The protein belongs to the conotoxin A superfamily. In terms of processing, contains 3 disulfide bonds. They are not indicated here, since framework IV presents two different connectivities (I-V, II-III, IV-VI and I-III, II-V, IV-VI). In terms of tissue distribution, expressed by the venom duct.

It is found in the secreted. This is Conotoxin Bu23 from Conus bullatus (Bubble cone).